The following is a 427-amino-acid chain: Glutamate-1-semialdehyde 2,1-aminomutase (427 aa).

Lys-265 is modified (N6-(pyridoxal phosphate)lysine).

This sequence belongs to the class-III pyridoxal-phosphate-dependent aminotransferase family. HemL subfamily. As to quaternary structure, homodimer. Pyridoxal 5'-phosphate serves as cofactor.

Its subcellular location is the cytoplasm. The catalysed reaction is (S)-4-amino-5-oxopentanoate = 5-aminolevulinate. Its pathway is porphyrin-containing compound metabolism; protoporphyrin-IX biosynthesis; 5-aminolevulinate from L-glutamyl-tRNA(Glu): step 2/2. The polypeptide is Glutamate-1-semialdehyde 2,1-aminomutase (Neisseria meningitidis serogroup C / serotype 2a (strain ATCC 700532 / DSM 15464 / FAM18)).